Here is a 61-residue protein sequence, read N- to C-terminus: Sec-independent protein translocase protein TatA (61 aa).

A helical membrane pass occupies residues 1-21; it reads MFGIGMPELIVILVIVLVVFG.

The protein belongs to the TatA/E family. The Tat system comprises two distinct complexes: a TatABC complex, containing multiple copies of TatA, TatB and TatC subunits, and a separate TatA complex, containing only TatA subunits. Substrates initially bind to the TatABC complex, which probably triggers association of the separate TatA complex to form the active translocon.

The protein resides in the cell inner membrane. In terms of biological role, part of the twin-arginine translocation (Tat) system that transports large folded proteins containing a characteristic twin-arginine motif in their signal peptide across membranes. TatA could form the protein-conducting channel of the Tat system. In Geobacter metallireducens (strain ATCC 53774 / DSM 7210 / GS-15), this protein is Sec-independent protein translocase protein TatA.